Reading from the N-terminus, the 362-residue chain is Class I histocompatibility antigen, Gogo-B*0101 alpha chain (362 aa).

Positions 1–24 (MRVTAPRTLLLLLSAALALTETWA) are cleaved as a signal peptide. The alpha-1 stretch occupies residues 25 to 114 (GSHSMRYFDT…ALRYYNQSEA (90 aa)). Over 25–308 (GSHSMRYFDT…EPSSQSTIPI (284 aa)) the chain is Extracellular. An N-linked (GlcNAc...) asparagine glycan is attached at Asn110. The interval 115-206 (GSHTIQRMFG…ENGRETLQRA (92 aa)) is alpha-2. 2 disulfide bridges follow: Cys125-Cys188 and Cys227-Cys283. The alpha-3 stretch occupies residues 207 to 298 (DTPKTHVTHH…GLPKPLTLRW (92 aa)). The Ig-like C1-type domain maps to 209–295 (PKTHVTHHPI…QHEGLPKPLT (87 aa)). Residues 299–308 (EPSSQSTIPI) form a connecting peptide region. A helical transmembrane segment spans residues 309-332 (VGIVAGLAVLAVVVIGAVVTAVIC). At 333–362 (RRKSSGGKGGSYSQAASSDSAQGSDVSLTA) the chain is on the cytoplasmic side. The tract at residues 335–362 (KSSGGKGGSYSQAASSDSAQGSDVSLTA) is disordered. A compositionally biased stretch (low complexity) spans 343 to 362 (SYSQAASSDSAQGSDVSLTA). Phosphoserine occurs at positions 356 and 359.

This sequence belongs to the MHC class I family. In terms of assembly, heterodimer of an alpha chain and a beta chain (beta-2-microglobulin).

It is found in the membrane. Involved in the presentation of foreign antigens to the immune system. The sequence is that of Class I histocompatibility antigen, Gogo-B*0101 alpha chain from Gorilla gorilla gorilla (Western lowland gorilla).